We begin with the raw amino-acid sequence, 181 residues long: Immunity-related GTPase family M protein (181 aa).

In terms of domain architecture, IRG-type G spans 32–181 (TPVNITMAGD…NLQKERVCEY (150 aa)). GTP is bound by residues 41–48 (DSGNGMST), 66–70 (TELVK), and 147–149 (KLD).

This sequence belongs to the TRAFAC class dynamin-like GTPase superfamily. IRG family. Interacts with ULK1; promoting the coassembly of ULK1 and BECN1. Interacts with BECN1; enhancing BECN1-interacting partners and influencing the composition of the BECN1 complex. Interacts with ATG16L1. Interacts with NOD2; promoting IRGM 'Lys-63'-linked polyubiquitination, which is required for interactions with the core autophagy factors. Interacts with STX17; promoting STX17 recruitment to autophagosomes. Interacts with ATG8 proteins (GABARAP, GABARAPL1, GABARAPL2, MAP1LC3A, MAP1LC3B and MAP1LC3C); promoting STX17 recruitment to autophagosomes. Interacts with TFEB; promoting association between TFEB and PPP3CB and TFEB dephosphorylation. Interacts with PPP3CB; promoting association between TFEB and PPP3CB and TFEB dephosphorylation. Interacts with NLRP3; preventing NLRP3 inflammasome assembly and promoting SQSTM1/p62-dependent autophagic degradation of NLRP3. Interacts with CGAS; promoting SQSTM1/p62-dependent autophagic degradation of CGAS. Interacts with RIGI/RIG-I; promoting SQSTM1/p62-dependent autophagic degradation of RIGI/RIG-I. Interacts with NOD1; promoting SQSTM1/p62-dependent autophagic degradation of RIGI/RIG-I. Interacts with NOD2; promoting SQSTM1/p62-dependent autophagic degradation of RIGI/RIG-I. Interacts with RIPK2; promoting SQSTM1/p62-dependent autophagic degradation of RIGI/RIG-I. Ubiquitinated via 'Lys-63'-linked polyubiquitination in a NOD2-dependent process. 'Lys-63'-linked polyubiquitination is required for interactions with the core autophagy factors. Widely expressed (at protein level). Expressed in several tissues including colon, small bowel and peripheral blood leukocytes.

The protein localises to the golgi apparatus membrane. The protein resides in the cell membrane. Its subcellular location is the cytoplasmic vesicle. It localises to the phagosome membrane. It is found in the autophagosome membrane. The protein localises to the lysosome membrane. The protein resides in the late endosome membrane. Its subcellular location is the mitochondrion membrane. It localises to the cell projection. It is found in the phagocytic cup. The protein localises to the mitochondrion. It catalyses the reaction GTP + H2O = GDP + phosphate + H(+). Functionally, immunity-related GTPase that plays important roles in innate immunity and inflammatory response. Acts as a dynamin-like protein that binds to intracellular membranes and promotes remodeling and trafficking of those membranes. Required for clearance of acute protozoan and bacterial infections by interacting with autophagy and lysosome regulatory proteins, thereby promoting the fusion of phagosomes with lysosomes for efficient degradation of cargo including microbes. Regulates selective autophagy, including xenophagy and mitophagy, both directly and indirectly. Directly regulates autophagy by acting as a molecular adapter that promotes the coassembly of the core autophagy machinery to mediate antimicrobial defense: IRGM (1) activates AMPK, which in turn phosphorylates ULK1 and BECN1 to induce autophagy, (2) promotes the coassembly of ULK1 and BECN1, enhancing BECN1-interacting partners and (3) influences the composition of the BECN1 complex, by competing with the negative regulators BCL2 and RUBCN, to trigger autophagy. Also activates autophagy by promoting recruitment of STX17 to autophagosomes. In collaboration with ATG8 proteins, regulate lysosomal biogenesis, a fundamental process for any autophagic pathway, by promoting TFEB dephosphorylation. Also modulates autophagy by assisting with autophagosome formation and preventing lysosomal deacidification. While activating autophagy, acts as a key negative regulator of the inflammatory and interferon responses both by (1) promoting mitophagy and (2) mediating autophagy-dependent degradation of effectors of the inflammatory response. Promotes degradation of damaged and IFNG/IFN-gamma-stressed mitochondria via mitophagy, preventing cytosolic release of ligands that activate inflammation. Acts as a suppressor of inflammation by promoting recruitment of inflammation effectors, such as CGAS, RIGI/RIG-I and NLRP3, to autophagosome membranes, leading to their SQSTM1/p62-dependent autophagic degradation. Also directly inhibits assembly of the NLRP3 inflammasome by preventing the association between NLRP3 and PYCARD. Acts as a negative regulator of antiviral innate immune response by suppressing the RIPK2-dependent pro-inflammatory response: mediates recruitment of RIPosomes, composed of RIPK2 and NOD1 or NOD2, to autophagosome membranes, promoting their SQSTM1/p62-dependent autophagic degradation. Its function is as follows. Acts as a positive regulator of mitophagy in response to intracellular mycobacteria infection: specifically binds cardiolipin, leading to its translocation to mitochondria, where it promotes affected mitochondrial fission and mitophagy. In terms of biological role, (Microbial infection) Following infection by hepatitis C virus (HCV), promotes HCV-triggered membrane remodeling, leading to autophagy and Golgi fragmentation, a step required for HCV replication. In Homo sapiens (Human), this protein is Immunity-related GTPase family M protein.